Consider the following 475-residue polypeptide: Ankyrin repeat, SAM and basic leucine zipper domain-containing protein 1 (475 aa).

The disordered stretch occupies residues 1 to 25 (MAAGALRGLPVAGGGESSESEDDGW). Phosphoserine is present on residues serine 17, serine 18, and serine 20. ANK repeat units lie at residues 45 to 74 (EKKE…SVDS), 78 to 107 (YGWT…NASF), 110 to 144 (DKQT…DPNV), 148 to 177 (RLMT…EVNT), 181 to 210 (NGYT…NKML), and 214 to 243 (DGKM…PLEG). The SAM domain maps to 272 to 334 (SYTAFGDLEV…KILAALKELQ (63 aa)).

As to quaternary structure, interacts with DDX4, PIWIL1, RANBP9 and TDRD1.

It localises to the cytoplasm. Plays a central role during spermatogenesis by repressing transposable elements and preventing their mobilization, which is essential for the germline integrity. Acts via the piRNA metabolic process, which mediates the repression of transposable elements during meiosis by forming complexes composed of piRNAs and Piwi proteins and governs the methylation and subsequent repression of transposons. Its association with pi-bodies suggests a participation in the primary piRNAs metabolic process. Required prior to the pachytene stage to facilitate the production of multiple types of piRNAs, including those associated with repeats involved in the regulation of retrotransposons. May act by mediating protein-protein interactions during germ cell maturation. The protein is Ankyrin repeat, SAM and basic leucine zipper domain-containing protein 1 (ASZ1) of Papio anubis (Olive baboon).